Consider the following 151-residue polypeptide: 3-dehydroquinate dehydratase (151 aa).

Tyrosine 24 serves as the catalytic Proton acceptor. Substrate contacts are provided by asparagine 76, histidine 82, and aspartate 89. The active-site Proton donor is histidine 102. Residues 103 to 104 and arginine 113 each bind substrate; that span reads VS.

The protein belongs to the type-II 3-dehydroquinase family. Homododecamer.

The catalysed reaction is 3-dehydroquinate = 3-dehydroshikimate + H2O. It participates in metabolic intermediate biosynthesis; chorismate biosynthesis; chorismate from D-erythrose 4-phosphate and phosphoenolpyruvate: step 3/7. In terms of biological role, catalyzes a trans-dehydration via an enolate intermediate. This Rhodopseudomonas palustris (strain TIE-1) protein is 3-dehydroquinate dehydratase.